We begin with the raw amino-acid sequence, 450 residues long: Bifunctional protein GlmU (450 aa).

The pyrophosphorylase stretch occupies residues 1-229 (MRRHAIILAA…VEEIMGVNDR (229 aa)). UDP-N-acetyl-alpha-D-glucosamine-binding positions include 8-11 (LAAG), K22, Q72, and 77-78 (GT). Mg(2+) is bound at residue D102. UDP-N-acetyl-alpha-D-glucosamine is bound by residues G139, E154, and N227. Residue N227 coordinates Mg(2+). The segment at 230-250 (VMLSQAENAMQRRTNHYHMLN) is linker. The N-acetyltransferase stretch occupies residues 251 to 450 (GVTIIDPDST…RQTTKEGYRK (200 aa)). Residues R332 and K350 each coordinate UDP-N-acetyl-alpha-D-glucosamine. H362 acts as the Proton acceptor in catalysis. UDP-N-acetyl-alpha-D-glucosamine-binding residues include Y365 and N376. Residues 385-386 (NY), A422, and R439 each bind acetyl-CoA.

It in the N-terminal section; belongs to the N-acetylglucosamine-1-phosphate uridyltransferase family. This sequence in the C-terminal section; belongs to the transferase hexapeptide repeat family. Homotrimer. It depends on Mg(2+) as a cofactor.

The protein resides in the cytoplasm. It carries out the reaction alpha-D-glucosamine 1-phosphate + acetyl-CoA = N-acetyl-alpha-D-glucosamine 1-phosphate + CoA + H(+). It catalyses the reaction N-acetyl-alpha-D-glucosamine 1-phosphate + UTP + H(+) = UDP-N-acetyl-alpha-D-glucosamine + diphosphate. It participates in nucleotide-sugar biosynthesis; UDP-N-acetyl-alpha-D-glucosamine biosynthesis; N-acetyl-alpha-D-glucosamine 1-phosphate from alpha-D-glucosamine 6-phosphate (route II): step 2/2. The protein operates within nucleotide-sugar biosynthesis; UDP-N-acetyl-alpha-D-glucosamine biosynthesis; UDP-N-acetyl-alpha-D-glucosamine from N-acetyl-alpha-D-glucosamine 1-phosphate: step 1/1. It functions in the pathway bacterial outer membrane biogenesis; LPS lipid A biosynthesis. Its function is as follows. Catalyzes the last two sequential reactions in the de novo biosynthetic pathway for UDP-N-acetylglucosamine (UDP-GlcNAc). The C-terminal domain catalyzes the transfer of acetyl group from acetyl coenzyme A to glucosamine-1-phosphate (GlcN-1-P) to produce N-acetylglucosamine-1-phosphate (GlcNAc-1-P), which is converted into UDP-GlcNAc by the transfer of uridine 5-monophosphate (from uridine 5-triphosphate), a reaction catalyzed by the N-terminal domain. The protein is Bifunctional protein GlmU of Staphylococcus aureus (strain MRSA252).